The following is a 105-amino-acid chain: Large ribosomal subunit protein uL24 (105 aa).

Belongs to the universal ribosomal protein uL24 family. As to quaternary structure, part of the 50S ribosomal subunit.

One of two assembly initiator proteins, it binds directly to the 5'-end of the 23S rRNA, where it nucleates assembly of the 50S subunit. Functionally, one of the proteins that surrounds the polypeptide exit tunnel on the outside of the subunit. The sequence is that of Large ribosomal subunit protein uL24 from Staphylococcus aureus (strain Mu3 / ATCC 700698).